We begin with the raw amino-acid sequence, 285 residues long: Putative phosphatase MG125 (285 aa).

The Nucleophile role is filled by Asp8. Asp8 provides a ligand contact to Mg(2+). Residue Leu9 coordinates phosphate. Asp10 serves as a coordination point for Mg(2+). Phosphate contacts are provided by residues 44–45 (TG) and Lys205. The Mg(2+) site is built by Asp228 and Ser229. Asn231 contacts phosphate.

Belongs to the HAD-like hydrolase superfamily. Cof family. Mg(2+) is required as a cofactor.

The sequence is that of Putative phosphatase MG125 from Mycoplasma genitalium (strain ATCC 33530 / DSM 19775 / NCTC 10195 / G37) (Mycoplasmoides genitalium).